The following is a 352-amino-acid chain: uncharacterized protein (352 aa).

The stretch at 285 to 352 forms a coiled coil; sequence FQHLRNARER…IKSEIRRLQR (68 aa).

This is an uncharacterized protein from Emericella nidulans (strain FGSC A4 / ATCC 38163 / CBS 112.46 / NRRL 194 / M139) (Aspergillus nidulans).